A 232-amino-acid chain; its full sequence is Small ribosomal subunit protein uS2 (232 aa).

Belongs to the universal ribosomal protein uS2 family.

This chain is Small ribosomal subunit protein uS2, found in Desulforamulus reducens (strain ATCC BAA-1160 / DSM 100696 / MI-1) (Desulfotomaculum reducens).